Consider the following 127-residue polypeptide: Small ribosomal subunit protein bS6 (127 aa).

The protein belongs to the bacterial ribosomal protein bS6 family.

Binds together with bS18 to 16S ribosomal RNA. The polypeptide is Small ribosomal subunit protein bS6 (Buchnera aphidicola subsp. Cinara cedri (strain Cc)).